The following is a 530-amino-acid chain: MPYNLKQLFQKHNVKGLSINSKTVKENDIFFAIKGQNVDGNDFINEVLNQAVALVITDNKKNTIIDDKVIYVEDVQVALYEAIEIFYPKKPKNLIAVTGTNGKSSVVSYIAQTYSLLGKKAASIGTIGVEIFGCDNLINDVPELTTLDYLSFRKIAHNLAENNIEYLAFEASSHGLNQARLGEIKVNTACFTSFSQDHLDYHHTKENYLLAKLKLFTRHLFKPAYREEFKGDTEHSTTAYILVREDASTGSTSKLLLEAKFGKMSTEYLLQGGLAILNSDIAEIEFVKDYLRNHNIKFITVGKKGDVQITKINGSLKAQNINFIFNNRECSFNTSIIGSFQASNLLIAALSIHYIGFDFNKIIEILTQVKPVKGRMERIGNTNIFVDYSHTPDALEKALTELKNVKLRDSRLNVVFGCGGNRDKTKRSLMGQIAARLADNVIITDDNPRHEDPKLIRAEIISGIEKADYTEIANREEAIKYGINNLKQDDILLIAGKGHENYQIIGDKKLPFDDAEIVRKLMSLRGKAKP.

Position 21 (Ser-21) interacts with UDP-N-acetyl-alpha-D-muramoyl-L-alanyl-D-glutamate. Residue 99–105 (GTNGKSS) participates in ATP binding. UDP-N-acetyl-alpha-D-muramoyl-L-alanyl-D-glutamate is bound by residues 145–146 (TT), Ser-172, Gln-178, and Arg-180. Lys-212 carries the N6-carboxylysine modification. An RPE1 insert domain is found at 221–269 (FKPAYREEFKGDTEHSTTAYILVREDASTGSTSKLLLEAKFGKMSTEYL). Meso-2,6-diaminopimelate contacts are provided by residues Arg-422, 446–449 (DNPR), Gly-496, and Glu-500. A Meso-diaminopimelate recognition motif motif is present at residues 446-449 (DNPR).

It belongs to the MurCDEF family. MurE subfamily. It depends on Mg(2+) as a cofactor. In terms of processing, carboxylation is probably crucial for Mg(2+) binding and, consequently, for the gamma-phosphate positioning of ATP.

Its subcellular location is the cytoplasm. The enzyme catalyses UDP-N-acetyl-alpha-D-muramoyl-L-alanyl-D-glutamate + meso-2,6-diaminopimelate + ATP = UDP-N-acetyl-alpha-D-muramoyl-L-alanyl-gamma-D-glutamyl-meso-2,6-diaminopimelate + ADP + phosphate + H(+). It participates in cell wall biogenesis; peptidoglycan biosynthesis. Catalyzes the addition of meso-diaminopimelic acid to the nucleotide precursor UDP-N-acetylmuramoyl-L-alanyl-D-glutamate (UMAG) in the biosynthesis of bacterial cell-wall peptidoglycan. This chain is UDP-N-acetylmuramoyl-L-alanyl-D-glutamate--2,6-diaminopimelate ligase, found in Rickettsia felis (strain ATCC VR-1525 / URRWXCal2) (Rickettsia azadi).